A 517-amino-acid polypeptide reads, in one-letter code: Serine hydroxymethyltransferase 2, mitochondrial (517 aa).

Residues 1-31 (MAMASALRRLSSSSNKPLQRLFNGGHLYSMS) constitute a mitochondrion transit peptide. Lys287 is subject to N6-(pyridoxal phosphate)lysine.

This sequence belongs to the SHMT family. As to quaternary structure, homotetramer. Pyridoxal 5'-phosphate serves as cofactor.

Its subcellular location is the mitochondrion. It catalyses the reaction (6R)-5,10-methylene-5,6,7,8-tetrahydrofolate + glycine + H2O = (6S)-5,6,7,8-tetrahydrofolate + L-serine. It participates in one-carbon metabolism; tetrahydrofolate interconversion. Catalyzes the interconversion of serine and glycine. This chain is Serine hydroxymethyltransferase 2, mitochondrial, found in Flaveria pringlei.